We begin with the raw amino-acid sequence, 437 residues long: MVIMKKMKDSVLFLVVGLFSLSVLVSQSIAGRVKAPLLQSNTGGLVFSKSFNSIYDTSMYGRLQLNNGLARTPQMGWNSWNFFACNINETVIKETADALVSSGLADLGYIHVNIDDCWSNLLRDSEGQLVPHPETFPSGIKLLADYVHSKGLKLGIYSDAGVFTCEVHPGSLFHEVDDADIFASWGVDYLKYDNCFNLGIKPIERYPPMRDALNATGRSIFYSLCEWGVDDPALWAKEVGNSWRTTDDINDTWASMTTIADLNNKWAAYAGPGGWNDPDMLEIGNGGMTYEEYRGHFSIWALMKAPLLIGCDVRNMTAETLEILSNKEIIAVNQDPLGVQGRKIQANGENDCQQVWSGPLSGDRMVVALWNRCSEPATITASWDMIGLESTISVSVRDLWQHKDVTENTSGSFEAQVDAHDCHMYVLTPQTVSHSDV.

A signal peptide spans 1-30 (MVIMKKMKDSVLFLVVGLFSLSVLVSQSIA). 2 disulfides stabilise this stretch: Cys-85–Cys-117 and Cys-165–Cys-195. N-linked (GlcNAc...) asparagine glycosylation occurs at Asn-88. Substrate contacts are provided by residues 115-116 (DD) and Lys-191. Asp-193 functions as the Nucleophile in the catalytic mechanism. N-linked (GlcNAc...) asparagine glycosylation occurs at Asn-214. Substrate contacts are provided by residues 226 to 230 (EWGVD), Arg-244, and Asp-248. Catalysis depends on Asp-248, which acts as the Proton donor. N-linked (GlcNAc...) asparagine glycans are attached at residues Asn-250, Asn-315, and Asn-408.

The protein belongs to the glycosyl hydrolase 27 family. Homodimer.

The protein localises to the secreted. Its subcellular location is the cell wall. The protein resides in the extracellular space. It localises to the apoplast. It is found in the vacuole. It catalyses the reaction Hydrolysis of terminal, non-reducing alpha-D-galactose residues in alpha-D-galactosides, including galactose oligosaccharides, galactomannans and galactolipids.. Functionally, may regulate leaf (and possibly other organ) development by functioning in cell wall loosening and cell wall expansion. The chain is Alpha-galactosidase 3 from Arabidopsis thaliana (Mouse-ear cress).